A 585-amino-acid chain; its full sequence is Zinc finger protein 732 (585 aa).

The KRAB domain maps to 4–75 (LTFRDVAIEF…KIHETVAKHP (72 aa)). The C2H2-type 1; degenerate zinc-finger motif lies at 141–163 (FQCNVHVKVFSTFSNSNQRRIRH). A C2H2-type 2; degenerate zinc finger spans residues 167-189 (KHFKECGKSFQKFSDLTQHQGIH). The C2H2-type 3; degenerate zinc finger occupies 195-217 (YTCEECGKDFKWYLIFNEYEIIH). The segment at 223 to 244 (FTCEECGNIFTTSSNFAKHKVH) adopts a C2H2-type 4 zinc-finger fold. A C2H2-type 5; degenerate zinc finger spans residues 250–272 (YKYEECGKAFNRSSTLTKHKRIH). C2H2-type zinc fingers lie at residues 278–300 (FTCE…KKIH), 306–328 (YKCQ…NRIH), 334–356 (YTCE…KRIH), 362–384 (YKCE…KSIH), 390–412 (YTCE…KRIH), 418–440 (HKCE…KIIH), 446–468 (YKCE…KKIH), 474–496 (YRCE…KTIH), and 502–524 (YECE…KKIH). The segment at 530 to 552 (YRCEECGKAFRRSRVLNKYKTIH) adopts a C2H2-type 15; degenerate zinc-finger fold. Residues 558–580 (PKCKGCGKAFKWSSYLNQHNKIY) form a C2H2-type 16; degenerate zinc finger.

The protein belongs to the krueppel C2H2-type zinc-finger protein family.

The protein localises to the nucleus. In terms of biological role, may be involved in transcriptional regulation. The chain is Zinc finger protein 732 (ZNF732) from Homo sapiens (Human).